The primary structure comprises 234 residues: Adenosine 5'-phosphosulfate reductase (234 aa).

[4Fe-4S] cluster contacts are provided by Cys-120, Cys-121, Cys-203, and Cys-206. The Nucleophile; cysteine thiosulfonate intermediate role is filled by Cys-229.

Belongs to the PAPS reductase family. CysH subfamily. [4Fe-4S] cluster serves as cofactor.

The protein resides in the cytoplasm. The catalysed reaction is [thioredoxin]-disulfide + sulfite + AMP + 2 H(+) = adenosine 5'-phosphosulfate + [thioredoxin]-dithiol. Its pathway is sulfur metabolism; hydrogen sulfide biosynthesis; sulfite from sulfate. Catalyzes the formation of sulfite from adenosine 5'-phosphosulfate (APS) using thioredoxin as an electron donor. The chain is Adenosine 5'-phosphosulfate reductase from Bacillus cereus (strain B4264).